A 272-amino-acid chain; its full sequence is MALWGLPGSAVLAASVFVGGAVSSPLVAADNTGSHTLHSRAETTPSSPTNNPGNGHPEYIAYVLVPVFFVMGLLGVLICHLLKKKGYRCTTEAEQEVEEEKVEKIELNDSINENSDTVGQIVQYIMKNEANADILKAMVADNSVGDIESPVTPSTPGSPPVSPGPLSPGATPGKHVCGHHLHTVGGVVERDVCQRCRHKRWHFIKPTNKTKEGRPRRQGEVTVLSVGRFRVTKVEHKSNQKERRSLMSVSGIESVNGDVPATPVKRERSDTE.

Residues 1 to 23 form the signal peptide; the sequence is MALWGLPGSAVLAASVFVGGAVS. The Extracellular segment spans residues 24–58; sequence SPLVAADNTGSHTLHSRAETTPSSPTNNPGNGHPE. The segment at 33–52 is disordered; it reads GSHTLHSRAETTPSSPTNNP. Residues 59–79 form a helical membrane-spanning segment; the sequence is YIAYVLVPVFFVMGLLGVLIC. The Cytoplasmic segment spans residues 80-272; it reads HLLKKKGYRC…PVKRERSDTE (193 aa). Residues 90 to 114 are a coiled coil; sequence TTEAEQEVEEEKVEKIELNDSINEN. Ser-110 and Ser-115 each carry phosphoserine. Disordered regions lie at residues 146-171 and 235-272; these read DIES…PGAT and EHKS…SDTE. Residues 156–166 are compositionally biased toward pro residues; it reads PGSPPVSPGPL. The segment covering 235 to 245 has biased composition (basic and acidic residues); it reads EHKSNQKERRS. Residues Ser-245 and Ser-248 each carry the phosphoserine modification.

This sequence belongs to the RELT family. As to quaternary structure, interacts with RELT, RELL2, OXSR1 and PLSCR1.

Its subcellular location is the cell membrane. Functionally, induces activation of MAPK14/p38 cascade, when overexpressed. Induces apoptosis, when overexpressed. The protein is RELT-like protein 1 (Rell1) of Mus musculus (Mouse).